The sequence spans 195 residues: 7-methyl-GTP pyrophosphatase (195 aa).

The Proton acceptor role is filled by Asp70.

This sequence belongs to the Maf family. YceF subfamily. The cofactor is a divalent metal cation.

It localises to the cytoplasm. The catalysed reaction is N(7)-methyl-GTP + H2O = N(7)-methyl-GMP + diphosphate + H(+). Nucleoside triphosphate pyrophosphatase that hydrolyzes 7-methyl-GTP (m(7)GTP). May have a dual role in cell division arrest and in preventing the incorporation of modified nucleotides into cellular nucleic acids. This Shewanella sp. (strain MR-7) protein is 7-methyl-GTP pyrophosphatase.